We begin with the raw amino-acid sequence, 331 residues long: Barley B recombinant-like protein D (331 aa).

The stretch at 43–101 forms a coiled coil; that stretch reads ALMNDRDNAIRERDHALAEKKAAIAERDMAFTQRDAAMAERNAAVVERDNALAALELAR. Positions 51-86 are alanine-zipper; sequence AIRERDHALAEKKAAIAERDMAFTQRDAAMAERNAA. Polar residues predominate over residues 104–122; sequence GLNMNNGNGFPQGSLSGSK. Disordered stretches follow at residues 104 to 140 and 156 to 205; these read GLNMNNGNGFPQGSLSGSKNIHHHDQLSHAQSSPLQL and AYPI…VGMS.

The protein belongs to the BBR/BPC family. As to quaternary structure, homodimer. Heterodimer.

Its subcellular location is the nucleus. Functionally, transcriptional regulator that specifically binds to GA-rich elements (GAGA-repeats) present in regulatory sequences of genes involved in developmental processes. The sequence is that of Barley B recombinant-like protein D from Oryza sativa subsp. japonica (Rice).